Consider the following 308-residue polypeptide: Ribosomal RNA small subunit methyltransferase H (308 aa).

S-adenosyl-L-methionine-binding positions include 33–35, Asp51, Phe82, Asp96, and Gln103; that span reads GGY.

It belongs to the methyltransferase superfamily. RsmH family.

It localises to the cytoplasm. It catalyses the reaction cytidine(1402) in 16S rRNA + S-adenosyl-L-methionine = N(4)-methylcytidine(1402) in 16S rRNA + S-adenosyl-L-homocysteine + H(+). Functionally, specifically methylates the N4 position of cytidine in position 1402 (C1402) of 16S rRNA. The chain is Ribosomal RNA small subunit methyltransferase H from Rickettsia canadensis (strain McKiel).